The primary structure comprises 64 residues: Conotoxin Ca5.3 (64 aa).

The N-terminal stretch at M1–A22 is a signal peptide. The propeptide occupies Q23 to N48. Isoleucine amide is present on I61.

This sequence belongs to the conotoxin T superfamily. In terms of processing, contains 2 disulfide bonds that can be either 'C1-C3, C2-C4' or 'C1-C4, C2-C3', since these disulfide connectivities have been observed for conotoxins with cysteine framework V (for examples, see AC P0DQQ7 and AC P81755). As to expression, expressed by the venom duct.

Its subcellular location is the secreted. The sequence is that of Conotoxin Ca5.3 from Conus caracteristicus (Characteristic cone).